Reading from the N-terminus, the 261-residue chain is [LysW]-aminoadipate/[LysW]-glutamate kinase (261 aa).

Residues G35–G36, R62, and N166 contribute to the substrate site.

Belongs to the acetylglutamate kinase family. LysZ subfamily.

It is found in the cytoplasm. It catalyses the reaction [amino-group carrier protein]-C-terminal-N-(1,4-dicarboxybutan-1-yl)-L-glutamine + ATP = [amino-group carrier protein]-C-terminal-N-(1-carboxy-5-phosphooxy-5-oxopentan-1-yl)-L-glutamine + ADP. It carries out the reaction [amino-group carrier protein]-C-terminal-gamma-(L-glutamyl)-L-glutamate + ATP = [amino-group carrier protein]-C-terminal-gamma-(5-phospho-L-glutamyl)-L-glutamate + ADP. Its pathway is amino-acid biosynthesis; L-lysine biosynthesis via AAA pathway; L-lysine from L-alpha-aminoadipate (Thermus route): step 2/5. The protein operates within amino-acid biosynthesis; L-arginine biosynthesis. Involved in both the arginine and lysine biosynthetic pathways. Phosphorylates the LysW-bound precursors glutamate (for arginine biosynthesis), respectively alpha-aminoadipate (for lysine biosynthesis). In Sulfurisphaera tokodaii (strain DSM 16993 / JCM 10545 / NBRC 100140 / 7) (Sulfolobus tokodaii), this protein is [LysW]-aminoadipate/[LysW]-glutamate kinase.